The chain runs to 342 residues: MDILKAEIARKRKQLEEKALVGGEKKYFKRSELTAKEKEEYFERCGYKMQKEEEEEKPSSSSNPVLELELAEEKLPMTLSRQEVIRRLRERGEPIRLFGETDYETFQRLRKIEILAPEVNKGLRNDLKAALDKIDQQYFNELVAGQETTDEDTQNDLKVHEENTTIEELEVLGECLGQGDDNKDMDTINKVLKFLLGVWAKELNAREDYVKRSVHGKLASATQKQTESYLKPLFRKLRKKNLPADIKESITDIIKFMLQREYVKANDAYLQMAIGNAPWPIGVTMVGIHARTGREKIFSKHVAHVLNDETQRKYIQGLKRLMTICQKYFSTDPSKCVEYNAL.

The protein belongs to the PRP18 family. In terms of assembly, interacts with the spliceosome. Part of a complex containing U4/U6 snRNPs.

It is found in the nucleus speckle. Participates in the second step of pre-mRNA splicing. The chain is Pre-mRNA-splicing factor 18 (prpf18) from Xenopus laevis (African clawed frog).